A 379-amino-acid chain; its full sequence is Protein RecA (379 aa).

79-86 (GPESSGKT) contributes to the ATP binding site.

This sequence belongs to the RecA family.

It localises to the cytoplasm. Its function is as follows. Can catalyze the hydrolysis of ATP in the presence of single-stranded DNA, the ATP-dependent uptake of single-stranded DNA by duplex DNA, and the ATP-dependent hybridization of homologous single-stranded DNAs. It interacts with LexA causing its activation and leading to its autocatalytic cleavage. This chain is Protein RecA, found in Streptococcus agalactiae.